Reading from the N-terminus, the 212-residue chain is GTP-binding nuclear protein Ran (212 aa).

The Small GTPase Ran-type domain occupies glutamate 3–asparagine 167. Aspartate 14–threonine 21 contacts GTP. Residues proline 33–valine 41 are switch-I. Residues glycine 64, asparagine 118–aspartate 121, and serine 146–lysine 148 each bind GTP. The switch-II stretch occupies residues glycine 64–asparagine 80.

The protein belongs to the small GTPase superfamily. Ran family. In terms of assembly, found in a nuclear export complex with RanGTP, exportin and pre-miRNA.

It is found in the nucleus. In terms of biological role, GTP-binding protein involved in nucleocytoplasmic transport. Required for the import of protein into the nucleus and also for RNA export. Involved in chromatin condensation and control of cell cycle. This Dictyostelium discoideum (Social amoeba) protein is GTP-binding nuclear protein Ran (ranA).